The chain runs to 406 residues: 8-amino-7-oxononanoate synthase (406 aa).

Residue Arg-21 coordinates substrate. Pyridoxal 5'-phosphate is bound at residue Gly-112–Tyr-113. Position 137 (His-137) interacts with substrate. 3 residues coordinate pyridoxal 5'-phosphate: Ser-183, His-211, and Thr-239. Position 242 is an N6-(pyridoxal phosphate)lysine (Lys-242). Thr-358 contacts substrate.

This sequence belongs to the class-II pyridoxal-phosphate-dependent aminotransferase family. BioF subfamily. Homodimer. Pyridoxal 5'-phosphate serves as cofactor.

The enzyme catalyses 6-carboxyhexanoyl-[ACP] + L-alanine + H(+) = (8S)-8-amino-7-oxononanoate + holo-[ACP] + CO2. Its pathway is cofactor biosynthesis; biotin biosynthesis. Catalyzes the decarboxylative condensation of pimeloyl-[acyl-carrier protein] and L-alanine to produce 8-amino-7-oxononanoate (AON), [acyl-carrier protein], and carbon dioxide. The polypeptide is 8-amino-7-oxononanoate synthase (Burkholderia orbicola (strain MC0-3)).